A 406-amino-acid polypeptide reads, in one-letter code: Multifunctional CCA protein (406 aa).

G8 and R11 together coordinate ATP. Positions 8 and 11 each coordinate CTP. Residues E21 and D23 each contribute to the Mg(2+) site. ATP is bound by residues R91, R137, and R140. CTP is bound by residues R91, R137, and R140. Residues 225–326 (TGIHTLKVLE…LKLLNRVDAF (102 aa)) enclose the HD domain.

This sequence belongs to the tRNA nucleotidyltransferase/poly(A) polymerase family. Bacterial CCA-adding enzyme type 1 subfamily. In terms of assembly, monomer. Can also form homodimers and oligomers. The cofactor is Mg(2+). Ni(2+) is required as a cofactor.

The enzyme catalyses a tRNA precursor + 2 CTP + ATP = a tRNA with a 3' CCA end + 3 diphosphate. The catalysed reaction is a tRNA with a 3' CCA end + 2 CTP + ATP = a tRNA with a 3' CCACCA end + 3 diphosphate. In terms of biological role, catalyzes the addition and repair of the essential 3'-terminal CCA sequence in tRNAs without using a nucleic acid template. Adds these three nucleotides in the order of C, C, and A to the tRNA nucleotide-73, using CTP and ATP as substrates and producing inorganic pyrophosphate. tRNA 3'-terminal CCA addition is required both for tRNA processing and repair. Also involved in tRNA surveillance by mediating tandem CCA addition to generate a CCACCA at the 3' terminus of unstable tRNAs. While stable tRNAs receive only 3'-terminal CCA, unstable tRNAs are marked with CCACCA and rapidly degraded. This Nitrosococcus oceani (strain ATCC 19707 / BCRC 17464 / JCM 30415 / NCIMB 11848 / C-107) protein is Multifunctional CCA protein.